The sequence spans 227 residues: ATP synthase F(0) complex subunit a (227 aa).

Transmembrane regions (helical) follow at residues 12–32 (PYLMGMPLILPSLLLPTLLFP), 69–89 (WALLLTSLILLLLSINLMGLL), 98–118 (QLSMNMALAFPLWLATLLIGL), 139–159 (IPILIMIETTSLLIRPLALGV), 170–190 (LLIQLISTATIALLPTMPSIS), and 196–216 (ILLLLTILEVAVAMIQAYVFV).

It belongs to the ATPase A chain family. In terms of assembly, component of the ATP synthase complex composed at least of ATP5F1A/subunit alpha, ATP5F1B/subunit beta, ATP5MC1/subunit c (homooctomer), MT-ATP6/subunit a, MT-ATP8/subunit 8, ATP5ME/subunit e, ATP5MF/subunit f, ATP5MG/subunit g, ATP5MK/subunit k, ATP5MJ/subunit j, ATP5F1C/subunit gamma, ATP5F1D/subunit delta, ATP5F1E/subunit epsilon, ATP5PF/subunit F6, ATP5PB/subunit b, ATP5PD/subunit d, ATP5PO/subunit OSCP. ATP synthase complex consists of a soluble F(1) head domain (subunits alpha(3) and beta(3)) - the catalytic core - and a membrane F(0) domain - the membrane proton channel (subunits c, a, 8, e, f, g, k and j). These two domains are linked by a central stalk (subunits gamma, delta, and epsilon) rotating inside the F1 region and a stationary peripheral stalk (subunits F6, b, d, and OSCP). Interacts with DNAJC30; interaction is direct.

It is found in the mitochondrion inner membrane. The catalysed reaction is H(+)(in) = H(+)(out). Its function is as follows. Subunit a, of the mitochondrial membrane ATP synthase complex (F(1)F(0) ATP synthase or Complex V) that produces ATP from ADP in the presence of a proton gradient across the membrane which is generated by electron transport complexes of the respiratory chain. ATP synthase complex consist of a soluble F(1) head domain - the catalytic core - and a membrane F(1) domain - the membrane proton channel. These two domains are linked by a central stalk rotating inside the F(1) region and a stationary peripheral stalk. During catalysis, ATP synthesis in the catalytic domain of F(1) is coupled via a rotary mechanism of the central stalk subunits to proton translocation. With the subunit c (ATP5MC1), forms the proton-conducting channel in the F(0) domain, that contains two crucial half-channels (inlet and outlet) that facilitate proton movement from the mitochondrial intermembrane space (IMS) into the matrix. Protons are taken up via the inlet half-channel and released through the outlet half-channel, following a Grotthuss mechanism. The protein is ATP synthase F(0) complex subunit a of Coturnix japonica (Japanese quail).